A 360-amino-acid polypeptide reads, in one-letter code: 3-dehydroquinate synthase (360 aa).

NAD(+)-binding positions include 69 to 74 (DGEAYK), 103 to 107 (GVIGD), 127 to 128 (TT), Lys-140, Lys-149, and 167 to 170 (CLQT). 3 residues coordinate Zn(2+): Glu-182, His-245, and His-262.

It belongs to the sugar phosphate cyclases superfamily. Dehydroquinate synthase family. Co(2+) is required as a cofactor. Zn(2+) serves as cofactor. The cofactor is NAD(+).

The protein localises to the cytoplasm. It carries out the reaction 7-phospho-2-dehydro-3-deoxy-D-arabino-heptonate = 3-dehydroquinate + phosphate. Its pathway is metabolic intermediate biosynthesis; chorismate biosynthesis; chorismate from D-erythrose 4-phosphate and phosphoenolpyruvate: step 2/7. In terms of biological role, catalyzes the conversion of 3-deoxy-D-arabino-heptulosonate 7-phosphate (DAHP) to dehydroquinate (DHQ). The sequence is that of 3-dehydroquinate synthase from Aeromonas hydrophila subsp. hydrophila (strain ATCC 7966 / DSM 30187 / BCRC 13018 / CCUG 14551 / JCM 1027 / KCTC 2358 / NCIMB 9240 / NCTC 8049).